The primary structure comprises 470 residues: Glucose-1-phosphate adenylyltransferase large subunit 1 (470 aa).

The protein belongs to the bacterial/plant glucose-1-phosphate adenylyltransferase family. In terms of assembly, heterotetramer. In terms of tissue distribution, prominently expressed in the leaves and a weaker expression is seen in the tubers.

Its subcellular location is the plastid. It is found in the chloroplast. It localises to the amyloplast. It carries out the reaction alpha-D-glucose 1-phosphate + ATP + H(+) = ADP-alpha-D-glucose + diphosphate. It functions in the pathway glycan biosynthesis; starch biosynthesis. With respect to regulation, activated by 3'phosphoglycerate, inhibited by orthophosphate. Allosteric regulation. Its function is as follows. This protein plays a role in synthesis of starch. It catalyzes the synthesis of the activated glycosyl donor, ADP-glucose from Glc-1-P and ATP. The chain is Glucose-1-phosphate adenylyltransferase large subunit 1 (AGPS1) from Solanum tuberosum (Potato).